Consider the following 232-residue polypeptide: uncharacterized protein (232 aa).

A run of 5 helical transmembrane segments spans residues 69–91, 104–126, 139–161, 166–188, and 200–219; these read LISA…YILF, FLEP…FFAL, FSRF…FFFL, ICFT…AMLS, and FIYS…QLII.

It localises to the cell membrane. This is an uncharacterized protein from Bacillus subtilis (strain 168).